Here is a 67-residue protein sequence, read N- to C-terminus: Probable Sec-independent protein translocase protein TatE (67 aa).

Residues 4 to 21 (ISITKLLVVAALVVLLFG) form a helical membrane-spanning segment. Residues 46–67 (EDAGAKKEAGGDIQAEKLSHKE) form a disordered region.

It belongs to the TatA/E family. TatE subfamily.

Its subcellular location is the cell inner membrane. In terms of biological role, part of the twin-arginine translocation (Tat) system that transports large folded proteins containing a characteristic twin-arginine motif in their signal peptide across membranes. TatE shares overlapping functions with TatA. In Citrobacter koseri (strain ATCC BAA-895 / CDC 4225-83 / SGSC4696), this protein is Probable Sec-independent protein translocase protein TatE.